The chain runs to 60 residues: Mating pheromone En-2 (60 aa).

Cystine bridges form between Cys11–Cys39, Cys24–Cys35, Cys31–Cys57, and Cys36–Cys48.

It is found in the secreted. Its function is as follows. Mating ciliate pheromones (or gamones) are diffusible extracellular communication signals that distinguish different intraspecific classes of cells commonly referred to as 'mating types'. They prepare the latter for conjugation by changing their cell surface properties. This Euplotes nobilii (Ciliate) protein is Mating pheromone En-2.